Here is a 652-residue protein sequence, read N- to C-terminus: 2',3'-cyclic-nucleotide 2'-phosphodiesterase/3'-nucleotidase (652 aa).

A signal peptide spans 1–24 (MFKRPLTLSLLASLIALTTSTAQA). Positions 36, 38, 81, 121, 230, 262, and 264 each coordinate a divalent metal cation. Substrate-binding positions include tyrosine 445 and 549 to 555 (YRAYSGK).

This sequence belongs to the 5'-nucleotidase family. The cofactor is a divalent metal cation.

The protein localises to the periplasm. The catalysed reaction is a nucleoside 2',3'-cyclic phosphate + H2O = a nucleoside 3'-phosphate + H(+). It catalyses the reaction a ribonucleoside 3'-phosphate + H2O = a ribonucleoside + phosphate. Its function is as follows. This bifunctional enzyme catalyzes two consecutive reactions during ribonucleic acid degradation. Converts a 2',3'-cyclic nucleotide to a 3'-nucleotide and then the 3'-nucleotide to the corresponding nucleoside and phosphate. The chain is 2',3'-cyclic-nucleotide 2'-phosphodiesterase/3'-nucleotidase (cpdB) from Yersinia enterocolitica.